The sequence spans 206 residues: Large ribosomal subunit protein bL25 (206 aa).

Residues 1–91 (MEYRLKAYYR…RPEHVDFFVL (91 aa)) form a bL25 domain region. The interval 92–206 (SDEPVEMYVP…IKKGKEEEEE (115 aa)) is CTC domain. The interval 184–206 (AEEAAAEVAEPEVIKKGKEEEEE) is disordered. The span at 195 to 206 (EVIKKGKEEEEE) shows a compositional bias: basic and acidic residues.

The protein belongs to the bacterial ribosomal protein bL25 family. CTC subfamily. In terms of assembly, part of the 50S ribosomal subunit. Contacts the 5S rRNA.

In terms of biological role, this is one of 3 proteins that mediate the attachment of the 5S rRNA onto the large ribosomal subunit. The chain is Large ribosomal subunit protein bL25 (rplY) from Thermus thermophilus.